The sequence spans 932 residues: MGLTPMMRQYLEVKESCKDCILFFRLGDFYEMFFEDAKVASKELELVLTGRDCGLEERAPMCGIPYHAANTYIGRLVSAGYKIAICEQLEDPSASKGIVKRGIIKIITPGTYTDSSFLEENKNNYIMSFYLDDNMCAMSFADISTGEFNSTHSNFKEAVVLDEISKFAPREIVLEENIKESFIHTIKERFPNISISKIKQENFDYNIDNNLKEQFNNFNENEYETIVKKSANGLLYYIFHTQKNILSNINKIDYYSIVDYLTIDVNSRRNLEITENLREKTKKGSLLWALDKTNTAMGGRQLRRWIEQPLINKNPIENRLNAVEELLNNISLQEDLKEDLKSIYDIERIVGKVASKSVNAKELISLKCSIGKVPYIKEYLSNFKSDLFLNMEQCIDTLEDIHKLLDKALLDNPSLSVKEGNIIKEGFNEEVDSLREAKSNGKKWIASLEQKEKEETGIKSLKVSYNKVFGYFIEITKANLNLVPEGRYIRKQTLSNAERYITPELKEMEEKILGAEEKLIDIEYKLFTEIRDFIEENIDRMQKTARIISDIDCLCSLATVALENNYIKPNINAKDEILIEEGRHPVVEKVIPKGEFISNDSLIDTKENQLILITGPNMAGKSTYMRQVALITIMAQIGSFVPAKKANISICDKIFTRIGASDDLAAGKSTFMVEMWEVSNILKNATSKSLVLLDEVGRGTSTYDGLSIAWSVIEYICNNKNLRCKTLFATHYHELTKLEDNIEGVKNYSVSVSELENEIVFLRKIIKGGADQSYGIEVAKLAGLPSPVINRAKEILQHIEGDKEENSLNIAPSKEYKSKDYIEVSKDTSNTKNNLGSEIKHDTLSETNTDTIIEDESTKEHLSSNKKQINCRINDEKSIKKEVAVDSFQINFEYIKRDKIIEEIKNIDILNMTPMEGFNKLYDIINKTKDID.

615–622 (GPNMAGKS) contributes to the ATP binding site.

The protein belongs to the DNA mismatch repair MutS family.

This protein is involved in the repair of mismatches in DNA. It is possible that it carries out the mismatch recognition step. This protein has a weak ATPase activity. The chain is DNA mismatch repair protein MutS from Clostridium botulinum (strain Hall / ATCC 3502 / NCTC 13319 / Type A).